We begin with the raw amino-acid sequence, 73 residues long: Tetrahydromethanopterin S-methyltransferase subunit G (73 aa).

The chain crosses the membrane as a helical span at residues 48–68 (IGILYGAVVGLLLFLIYVSVS).

The protein belongs to the MtrG family. In terms of assembly, the complex is composed of 8 subunits; MtrA, MtrB, MtrC, MtrD, MtrE, MtrF, MtrG and MtrH.

The protein resides in the cell membrane. It carries out the reaction 5-methyl-5,6,7,8-tetrahydromethanopterin + coenzyme M + 2 Na(+)(in) = 5,6,7,8-tetrahydromethanopterin + methyl-coenzyme M + 2 Na(+)(out). The protein operates within one-carbon metabolism; methanogenesis from CO(2); methyl-coenzyme M from 5,10-methylene-5,6,7,8-tetrahydromethanopterin: step 2/2. Its function is as follows. Part of a complex that catalyzes the formation of methyl-coenzyme M and tetrahydromethanopterin from coenzyme M and methyl-tetrahydromethanopterin. This is an energy-conserving, sodium-ion translocating step. The chain is Tetrahydromethanopterin S-methyltransferase subunit G from Methanosarcina acetivorans (strain ATCC 35395 / DSM 2834 / JCM 12185 / C2A).